The chain runs to 262 residues: Acyl-[acyl-carrier-protein]--UDP-N-acetylglucosamine O-acyltransferase (262 aa).

The protein belongs to the transferase hexapeptide repeat family. LpxA subfamily. Homotrimer.

The protein resides in the cytoplasm. It carries out the reaction a (3R)-hydroxyacyl-[ACP] + UDP-N-acetyl-alpha-D-glucosamine = a UDP-3-O-[(3R)-3-hydroxyacyl]-N-acetyl-alpha-D-glucosamine + holo-[ACP]. It participates in glycolipid biosynthesis; lipid IV(A) biosynthesis; lipid IV(A) from (3R)-3-hydroxytetradecanoyl-[acyl-carrier-protein] and UDP-N-acetyl-alpha-D-glucosamine: step 1/6. In terms of biological role, involved in the biosynthesis of lipid A, a phosphorylated glycolipid that anchors the lipopolysaccharide to the outer membrane of the cell. The chain is Acyl-[acyl-carrier-protein]--UDP-N-acetylglucosamine O-acyltransferase from Shigella dysenteriae serotype 1 (strain Sd197).